We begin with the raw amino-acid sequence, 291 residues long: Probable aquaporin PIP2-4 (291 aa).

Met1 carries the post-translational modification N-acetylmethionine. The segment at 1 to 22 is disordered; sequence MAKDLDVNESGPPAARDYKDPP. Position 2 is an N-acetylalanine; in Probable aquaporin PIP2-4, N-terminally processed (Ala2). At 2-39 the chain is on the cytoplasmic side; that stretch reads AKDLDVNESGPPAARDYKDPPPAPFFDMEELRKWPLYR. Residue Lys3 is modified to N6,N6-dimethyllysine. A helical transmembrane segment spans residues 40–60; the sequence is AVIAEFVATLLFLYVSILTVI. The Extracellular portion of the chain corresponds to 61 to 74; that stretch reads GYKAQTDATAGGVD. Residues 75-95 form a helical membrane-spanning segment; that stretch reads CGGVGILGIAWAFGGMIFVLV. Residues 96 to 125 are Cytoplasmic-facing; that stretch reads YCTAGISGGHINPAVTVGLFLARKVSLVRT. An NPA 1 motif is present at residues 107-109; the sequence is NPA. The chain crosses the membrane as a helical span at residues 126–146; it reads VLYIVAQCLGAICGCGFVKAF. Over 147–167 the chain is Extracellular; that stretch reads QSSYYTRYGGGANELADGYNK. Residues 168–188 form a helical membrane-spanning segment; the sequence is GTGLGAEIIGTFVLVYTVFSA. The Cytoplasmic portion of the chain corresponds to 189–201; sequence TDPKRNARDSHVP. Residues 202–222 traverse the membrane as a helical segment; that stretch reads VLAPLPIGFAVFMVHLATIPI. The Extracellular segment spans residues 223–249; sequence TGTGINPARSFGAAVIYNNEKAWDDQW. Positions 228 to 230 match the NPA 2 motif; the sequence is NPA. A helical transmembrane segment spans residues 250 to 270; sequence IFWVGPMIGAAAAAFYHQFIL. At 271–291 the chain is on the cytoplasmic side; sequence RAAAIKALGSFGSFGSFRSFA. 3 positions are modified to phosphoserine: Ser283, Ser286, and Ser289.

This sequence belongs to the MIP/aquaporin (TC 1.A.8) family. PIP (TC 1.A.8.11) subfamily. In terms of tissue distribution, expressed in roots.

It is found in the cell membrane. Its function is as follows. Aquaporins facilitate the transport of water and small neutral solutes across cell membranes. This chain is Probable aquaporin PIP2-4 (PIP2-4), found in Arabidopsis thaliana (Mouse-ear cress).